The sequence spans 361 residues: Chorismate synthase (361 aa).

Residue Arg-47 participates in NADP(+) binding. FMN is bound by residues 124–126 (RAS), Gly-286, 301–305 (KPTAT), and Arg-327.

It belongs to the chorismate synthase family. In terms of assembly, homotetramer. It depends on FMNH2 as a cofactor.

The catalysed reaction is 5-O-(1-carboxyvinyl)-3-phosphoshikimate = chorismate + phosphate. Its pathway is metabolic intermediate biosynthesis; chorismate biosynthesis; chorismate from D-erythrose 4-phosphate and phosphoenolpyruvate: step 7/7. Its function is as follows. Catalyzes the anti-1,4-elimination of the C-3 phosphate and the C-6 proR hydrogen from 5-enolpyruvylshikimate-3-phosphate (EPSP) to yield chorismate, which is the branch point compound that serves as the starting substrate for the three terminal pathways of aromatic amino acid biosynthesis. This reaction introduces a second double bond into the aromatic ring system. In Prochlorococcus marinus (strain NATL1A), this protein is Chorismate synthase.